Here is a 122-residue protein sequence, read N- to C-terminus: Large ribosomal subunit protein uL14 (122 aa).

It belongs to the universal ribosomal protein uL14 family. As to quaternary structure, part of the 50S ribosomal subunit. Forms a cluster with proteins L3 and L19. In the 70S ribosome, L14 and L19 interact and together make contacts with the 16S rRNA in bridges B5 and B8.

In terms of biological role, binds to 23S rRNA. Forms part of two intersubunit bridges in the 70S ribosome. The chain is Large ribosomal subunit protein uL14 from Pseudothermotoga lettingae (strain ATCC BAA-301 / DSM 14385 / NBRC 107922 / TMO) (Thermotoga lettingae).